The following is an 815-amino-acid chain: uncharacterized protein (815 aa).

Disordered regions lie at residues 123–183 (QSNT…QPST), 249–274 (NVNN…NNTN), 592–668 (IKQN…NLNS), and 765–815 (NNEE…EEIK). Composition is skewed to polar residues over residues 135–154 (SIIT…TSTT) and 174–183 (DSITVLQPST). Residues 595–611 (NGSSSSNNNSKLSSTNS) show a composition bias toward low complexity. The segment covering 612–639 (GQTSDNPINSSNGGQSIKKQGSNLSLNR) has biased composition (polar residues). Low complexity predominate over residues 640-668 (QQSSTKLNNQSNNNNNNNANTTNQNNLNS). Residues 765 to 782 (NNEEHNNNNKENNNENNK) show a composition bias toward basic and acidic residues. A compositionally biased stretch (low complexity) spans 783-809 (ENINNNNNIINNNNDNNCNENNNNCNE).

This is an uncharacterized protein from Dictyostelium discoideum (Social amoeba).